The sequence spans 112 residues: UPF0102 protein TTHA0372 (112 aa).

It belongs to the UPF0102 family.

This chain is UPF0102 protein TTHA0372, found in Thermus thermophilus (strain ATCC 27634 / DSM 579 / HB8).